Consider the following 629-residue polypeptide: Smc-like protein Sph1 (629 aa).

Coiled-coil stretches lie at residues 139–282 (LETE…LLDD) and 318–487 (AETT…NQFD).

The protein belongs to the Sph1/Sph2 family.

The protein localises to the cytoplasm. Its function is as follows. May play a role in a late step of replication. This Halobacterium salinarum (strain ATCC 29341 / DSM 671 / R1) protein is Smc-like protein Sph1 (sph1).